Here is a 72-residue protein sequence, read N- to C-terminus: Translation initiation factor IF-1 (72 aa).

The S1-like domain occupies M1–K72. Phosphotyrosine is present on Y60.

The protein belongs to the IF-1 family. Component of the 30S ribosomal translation pre-initiation complex which assembles on the 30S ribosome in the order IF-2 and IF-3, IF-1 and N-formylmethionyl-tRNA(fMet); mRNA recruitment can occur at any time during PIC assembly.

It localises to the cytoplasm. One of the essential components for the initiation of protein synthesis. Stabilizes the binding of IF-2 and IF-3 on the 30S subunit to which N-formylmethionyl-tRNA(fMet) subsequently binds. Helps modulate mRNA selection, yielding the 30S pre-initiation complex (PIC). Upon addition of the 50S ribosomal subunit IF-1, IF-2 and IF-3 are released leaving the mature 70S translation initiation complex. The sequence is that of Translation initiation factor IF-1 from Geobacillus thermodenitrificans (strain NG80-2).